The chain runs to 295 residues: Ethanolamine ammonia-lyase small subunit (295 aa).

The adenosylcob(III)alamin site is built by V207, E228, and C258.

Belongs to the EutC family. As to quaternary structure, the basic unit is a heterodimer which dimerizes to form tetramers. The heterotetramers trimerize; 6 large subunits form a core ring with 6 small subunits projecting outwards. The cofactor is adenosylcob(III)alamin.

It localises to the bacterial microcompartment. The enzyme catalyses ethanolamine = acetaldehyde + NH4(+). It functions in the pathway amine and polyamine degradation; ethanolamine degradation. Catalyzes the deamination of various vicinal amino-alcohols to oxo compounds. Allows this organism to utilize ethanolamine as the sole source of nitrogen and carbon in the presence of external vitamin B12. In Shigella sonnei (strain Ss046), this protein is Ethanolamine ammonia-lyase small subunit.